We begin with the raw amino-acid sequence, 256 residues long: Ribosomal RNA large subunit methyltransferase E (256 aa).

S-adenosyl-L-methionine contacts are provided by Gly-48, Trp-50, Asp-68, Asp-86, and Asp-111. The active-site Proton acceptor is Lys-151. Residues 198 to 256 (PVSPGDELDATVVDIGSEGDGIIKIDGYTLFVPGVENGDSVRVRVTDLKSNVGFAEVIE) form the TRAM domain.

The protein belongs to the class I-like SAM-binding methyltransferase superfamily. RNA methyltransferase RlmE family.

It is found in the cytoplasm. The catalysed reaction is uridine(2552) in 23S rRNA + S-adenosyl-L-methionine = 2'-O-methyluridine(2552) in 23S rRNA + S-adenosyl-L-homocysteine + H(+). Its function is as follows. Specifically methylates the uridine in position 2552 of 23S rRNA at the 2'-O position of the ribose in the fully assembled 50S ribosomal subunit. The protein is Ribosomal RNA large subunit methyltransferase E of Haloquadratum walsbyi (strain DSM 16790 / HBSQ001).